Reading from the N-terminus, the 440-residue chain is Serine hydroxymethyltransferase (440 aa).

(6S)-5,6,7,8-tetrahydrofolate-binding positions include leucine 119 and 123–125 (GHL). N6-(pyridoxal phosphate)lysine is present on lysine 228. Residue 370–372 (SPF) participates in (6S)-5,6,7,8-tetrahydrofolate binding.

It belongs to the SHMT family. In terms of assembly, homodimer. The cofactor is pyridoxal 5'-phosphate.

Its subcellular location is the cytoplasm. It carries out the reaction (6R)-5,10-methylene-5,6,7,8-tetrahydrofolate + glycine + H2O = (6S)-5,6,7,8-tetrahydrofolate + L-serine. The protein operates within one-carbon metabolism; tetrahydrofolate interconversion. It participates in amino-acid biosynthesis; glycine biosynthesis; glycine from L-serine: step 1/1. Catalyzes the reversible interconversion of serine and glycine with tetrahydrofolate (THF) serving as the one-carbon carrier. This reaction serves as the major source of one-carbon groups required for the biosynthesis of purines, thymidylate, methionine, and other important biomolecules. Also exhibits THF-independent aldolase activity toward beta-hydroxyamino acids, producing glycine and aldehydes, via a retro-aldol mechanism. This Chlorobaculum parvum (strain DSM 263 / NCIMB 8327) (Chlorobium vibrioforme subsp. thiosulfatophilum) protein is Serine hydroxymethyltransferase.